The primary structure comprises 269 residues: uncharacterized protein (269 aa).

Residues 52 to 262 (KNVYEQLVAT…RKILVESINK (211 aa)) are a coiled coil.

This is an uncharacterized protein from Caenorhabditis elegans.